The following is a 597-amino-acid chain: HECT-type ubiquitin ligase-interacting protein creD (597 aa).

3 disordered regions span residues 375–398 (EVDP…GTLS), 439–492 (ASEH…MATP), and 576–597 (SRSH…RGRA). The segment covering 452–466 (GPPSGSNTHGSNTHA) has biased composition (polar residues). Basic and acidic residues predominate over residues 472-483 (LSRRASDEDVHD).

The protein belongs to the arrestin family. In terms of assembly, interacts with hulA.

In terms of biological role, component of the regulatory network controlling carbon source utilization through ubiquitination and deubiquitination involving creA, creB, creC, creD and acrB. May be involved in signaling by recognizing appropriately phosphorylated substrates via its arrestin domains and then recruit a HECT-type ubiquitin ligase such as hulA, leading to ubiquitination of the substrate, providing a link between ubiquitination and phosphorylation in protein regulation and stability. The chain is HECT-type ubiquitin ligase-interacting protein creD (creD) from Emericella nidulans (strain FGSC A4 / ATCC 38163 / CBS 112.46 / NRRL 194 / M139) (Aspergillus nidulans).